A 250-amino-acid chain; its full sequence is Cell division protein ZapD (250 aa).

The protein belongs to the ZapD family. As to quaternary structure, interacts with FtsZ.

The protein localises to the cytoplasm. In terms of biological role, cell division factor that enhances FtsZ-ring assembly. Directly interacts with FtsZ and promotes bundling of FtsZ protofilaments, with a reduction in FtsZ GTPase activity. The chain is Cell division protein ZapD from Pectobacterium atrosepticum (strain SCRI 1043 / ATCC BAA-672) (Erwinia carotovora subsp. atroseptica).